The chain runs to 217 residues: Variable small protein 22 (217 aa).

The N-terminal stretch at 1 to 18 is a signal peptide; the sequence is MRKRISAIIMTLFMVFMS. A lipid anchor (N-palmitoyl cysteine) is attached at Cys19. A lipid anchor (S-diacylglycerol cysteine) is attached at Cys19. Residues 151–174 are disordered; the sequence is LGKNDASDDDTKKAIKKDNSDKTK. Residues 155 to 174 show a composition bias toward basic and acidic residues; it reads DASDDDTKKAIKKDNSDKTK.

The protein belongs to the variable small protein (Vsp) family.

Its subcellular location is the cell outer membrane. Functionally, the Vlp and Vsp proteins are antigenically distinct proteins, only one vlp or vsp gene is transcriptionally active at any one time. Switching between these genes is a mechanism of host immune response evasion. In Borrelia hermsii, this protein is Variable small protein 22.